The primary structure comprises 269 residues: NAD kinase (269 aa).

Asp-45 functions as the Proton acceptor in the catalytic mechanism. NAD(+) is bound by residues 45–46 (DG), 122–123 (NE), Arg-149, Asp-151, and Ala-186.

Belongs to the NAD kinase family. Requires a divalent metal cation as cofactor.

Its subcellular location is the cytoplasm. The enzyme catalyses NAD(+) + ATP = ADP + NADP(+) + H(+). In terms of biological role, involved in the regulation of the intracellular balance of NAD and NADP, and is a key enzyme in the biosynthesis of NADP. Catalyzes specifically the phosphorylation on 2'-hydroxyl of the adenosine moiety of NAD to yield NADP. The polypeptide is NAD kinase (Staphylococcus aureus (strain Mu3 / ATCC 700698)).